Reading from the N-terminus, the 548-residue chain is Asparagine--tRNA ligase, cytoplasmic (548 aa).

Positions 1–25 (MVLAELYVSDREGSDATGDGTKEKP) are disordered. The segment covering 8 to 25 (VSDREGSDATGDGTKEKP) has biased composition (basic and acidic residues). Ser61 carries the post-translational modification Phosphoserine. The disordered stretch occupies residues 69-91 (MWHREQMKSESREKKEAEDSLRR). A compositionally biased stretch (basic and acidic residues) spans 71–91 (HREQMKSESREKKEAEDSLRR). Lys244 is subject to N6-acetyllysine. Phosphoserine is present on Ser482. An N6-acetyllysine modification is found at Lys490.

The protein belongs to the class-II aminoacyl-tRNA synthetase family. In terms of assembly, homodimer.

Its subcellular location is the cytoplasm. The catalysed reaction is tRNA(Asn) + L-asparagine + ATP = L-asparaginyl-tRNA(Asn) + AMP + diphosphate + H(+). In terms of biological role, catalyzes the attachment of asparagine to tRNA(Asn) in a two-step reaction: asparagine is first activated by ATP to form Asn-AMP and then transferred to the acceptor end of tRNA(Asn). In addition to its essential role in protein synthesis, acts as a signaling molecule that induced migration of CCR3-expressing cells. Has an essential role in the development of the cerebral cortex, being required for proper proliferation of radial glial cells. This chain is Asparagine--tRNA ligase, cytoplasmic, found in Homo sapiens (Human).